Reading from the N-terminus, the 343-residue chain is Holliday junction branch migration complex subunit RuvB (343 aa).

A large ATPase domain (RuvB-L) region spans residues 4–193 (TDNLTAAQPQ…FGIVSRLEFY (190 aa)). Residues Leu-32, Arg-33, Gly-74, Lys-77, Thr-78, Thr-79, 140 to 142 (EDY), Arg-183, Tyr-193, and Arg-230 each bind ATP. Residue Thr-78 participates in Mg(2+) binding. The segment at 194–264 (ENRDLTTIVS…VADAALSMLD (71 aa)) is small ATPAse domain (RuvB-S). The tract at residues 267 to 343 (AQGLDVMDRK…YLHFGLPVEK (77 aa)) is head domain (RuvB-H). DNA-binding residues include Arg-322 and Arg-327.

This sequence belongs to the RuvB family. In terms of assembly, homohexamer. Forms an RuvA(8)-RuvB(12)-Holliday junction (HJ) complex. HJ DNA is sandwiched between 2 RuvA tetramers; dsDNA enters through RuvA and exits via RuvB. An RuvB hexamer assembles on each DNA strand where it exits the tetramer. Each RuvB hexamer is contacted by two RuvA subunits (via domain III) on 2 adjacent RuvB subunits; this complex drives branch migration. In the full resolvosome a probable DNA-RuvA(4)-RuvB(12)-RuvC(2) complex forms which resolves the HJ.

Its subcellular location is the cytoplasm. It carries out the reaction ATP + H2O = ADP + phosphate + H(+). Its function is as follows. The RuvA-RuvB-RuvC complex processes Holliday junction (HJ) DNA during genetic recombination and DNA repair, while the RuvA-RuvB complex plays an important role in the rescue of blocked DNA replication forks via replication fork reversal (RFR). RuvA specifically binds to HJ cruciform DNA, conferring on it an open structure. The RuvB hexamer acts as an ATP-dependent pump, pulling dsDNA into and through the RuvAB complex. RuvB forms 2 homohexamers on either side of HJ DNA bound by 1 or 2 RuvA tetramers; 4 subunits per hexamer contact DNA at a time. Coordinated motions by a converter formed by DNA-disengaged RuvB subunits stimulates ATP hydrolysis and nucleotide exchange. Immobilization of the converter enables RuvB to convert the ATP-contained energy into a lever motion, pulling 2 nucleotides of DNA out of the RuvA tetramer per ATP hydrolyzed, thus driving DNA branch migration. The RuvB motors rotate together with the DNA substrate, which together with the progressing nucleotide cycle form the mechanistic basis for DNA recombination by continuous HJ branch migration. Branch migration allows RuvC to scan DNA until it finds its consensus sequence, where it cleaves and resolves cruciform DNA. This chain is Holliday junction branch migration complex subunit RuvB, found in Neisseria gonorrhoeae (strain NCCP11945).